Consider the following 191-residue polypeptide: ATP synthase subunit b 2 (191 aa).

Residues 1–12 (MAESHGEAKGGE) show a composition bias toward basic and acidic residues. A disordered region spans residues 1 to 31 (MAESHGEAKGGEAKGTASAHTEAEGGHGFPP). The chain crosses the membrane as a helical span at residues 38–60 (PSQIASLVIAFVALYVIVSRVAL).

Belongs to the ATPase B chain family. In terms of assembly, F-type ATPases have 2 components, F(1) - the catalytic core - and F(0) - the membrane proton channel. F(1) has five subunits: alpha(3), beta(3), gamma(1), delta(1), epsilon(1). F(0) has three main subunits: a(1), b(2) and c(10-14). The alpha and beta chains form an alternating ring which encloses part of the gamma chain. F(1) is attached to F(0) by a central stalk formed by the gamma and epsilon chains, while a peripheral stalk is formed by the delta and b chains.

It localises to the cell inner membrane. In terms of biological role, f(1)F(0) ATP synthase produces ATP from ADP in the presence of a proton or sodium gradient. F-type ATPases consist of two structural domains, F(1) containing the extramembraneous catalytic core and F(0) containing the membrane proton channel, linked together by a central stalk and a peripheral stalk. During catalysis, ATP synthesis in the catalytic domain of F(1) is coupled via a rotary mechanism of the central stalk subunits to proton translocation. Functionally, component of the F(0) channel, it forms part of the peripheral stalk, linking F(1) to F(0). The b'-subunit is a diverged and duplicated form of b found in plants and photosynthetic bacteria. In Bradyrhizobium sp. (strain ORS 278), this protein is ATP synthase subunit b 2 (atpF2).